We begin with the raw amino-acid sequence, 206 residues long: Small ribosomal subunit protein uS4 (206 aa).

The region spanning 96-159 (SRLDNVVYRM…KKQARIVEGL (64 aa)) is the S4 RNA-binding domain.

The protein belongs to the universal ribosomal protein uS4 family. As to quaternary structure, part of the 30S ribosomal subunit. Contacts protein S5. The interaction surface between S4 and S5 is involved in control of translational fidelity.

Its function is as follows. One of the primary rRNA binding proteins, it binds directly to 16S rRNA where it nucleates assembly of the body of the 30S subunit. With S5 and S12 plays an important role in translational accuracy. The sequence is that of Small ribosomal subunit protein uS4 from Chromobacterium violaceum (strain ATCC 12472 / DSM 30191 / JCM 1249 / CCUG 213 / NBRC 12614 / NCIMB 9131 / NCTC 9757 / MK).